We begin with the raw amino-acid sequence, 4060 residues long: MFYNQVTLAVASDSEISGFGFAIPSVAVRTYSEAAAQGFQACRFVAFGLQDCVTGINDDDYVIALTGTNQLCAKILPFSDRPLNLRGWLIFSNSNYVLQDFDVVFGHGAGSVVFVDKYMCGFDGKPVLPKNMWEFRDYFNNNTDSIVIGGVTYQLAWDVIRKDLSYEQQNVLAIESIHYLGTTGHTLKSGCKLTNAKPPKYSSKVVLSGEWNAVYRAFGSPFITNGMSLLDIIVKPVFFNAFVKCNCGSESWSVGAWDGYLSSCCGTPAKKLCVVPGNVVPGDVIITSTSAGCGVKYYAGLVVKHITNITGVSLWRVTAVHSDGMFVASSSYDALLHRNSLDPFCFDVNTLLSNQLRLAFLGASVTEDVKFAASTGVIDISAGMFGLYDDILTNNKPWFVRKASGLFDAIWDAFVAAIKLVPTTTGVLVRFVKSIASTVLTVSNGVIIMCADVPDAFQSVYRTFTQAICAAFDFSLDVFKIGDVKFKRLGDYVLTENALVRLTTEVVRGVRDARIKKAMFTKVVVGPTTEVKFSVIELATVNLRLVDCAPVVCPKGKIVVIAGQAFFYSGGFYRFMVDPTTVLNDPVFTGDLFYTIKFSGFKLDGFNHQFVTASSATDAIIAVELLLLDFKTAVFVYTCVVDGCSVIVRRDATFATHVCFKDCYNVWEQFCIDNCGEPWFLTDYNAILQSNNPQCAIVQASESKVLLERFLPKCPEILLSIDDGHLWNLFVEKFNFVTDWLKTLKLTLTSNGLLGNCAKRFRRVLVKLLDVYNGFLETVCSVAYTAGVCIKYYAVNVPYVVISGFVSRVIRRERCDMTFPCVSCVTFFYEFLDTCFGVSKPNAIDVEHLELKETVFVEPKDGGQFFVSGDYLWYVVDDIYYPASCNGVLPVAFTKLAGGKISFSDDVIVHDVEPTHKVKLIFEFEDDVVTSLCKKSFGKSIIYTGDWEGLHEVLTSAMNVIGQHIKLPQFYIYDEEGGYDVSKPVMISQWPISNDSNGCVVEASTDFHQLECIVDDSVREEVDIIEQPFEEVEHVLSIKQPFSFSFRDELGVRVLDQSDNNCWISTTLVQLQLTKLLDDSIEMQLFKVGKVDSIVQKCYELSHLISGSLGDSGKLLSELLKEKYTCSITFEMSCDCGKKFDDQVGCLFWIMPYTKLFQKGECCICHKMQTYKLVSMKGTGVFVQDPAPIDIDAFPVKPICSSVYLGVKGSGHYQTNLYSFNKAIDGFGVFDIKNSSVNTVCFVDVDFHSVEIEAGEVKPFAVYKNVKFYLGDISHLVNCVSFDFVVNAANENLLHGGGVARAIDILTEGQLQSLSKDYISSNGPLKVGAGVMLECEKFNVFNVVGPRTGKHEHSLLVEAYNSILFENGIPLMPLLSCGIFGVRIENSLKALFSCDINKPLQVFVYSSNEEQAVLKFLDGLDLTPVIDDVDVVKPFRVEGNFSFFDCGVNALDGDIYLLFTNSILMLDKQGQLLDTKLNGILQQAALDYLATVKTVPAGNLVKLFVESCTIYMCVVPSINDLSFDKNLGRCVRKLNRLKTCVIANVPAIDVLKKLLSSLTLTVKFVVESNVMDVNDCFKNDNVVLKITEDGINVKDVVVESSKSLGKQLGVVSDGVDSFEGVLPINTDTVLSVAPEVDWVAFYGFEKAALFASLDVKPYGYPNDFVGGFRVLGTTDNNCWVNATCIILQYLKPTFKSKGLNVLWNKFVTGDVGPFVSFIYFITMSSKGQKGDAEEALSKLSEYLISDSIVTLEQYSTCDICKSTVVEVKSAIVCASVLKDGCDVGFCPHRHKLRSRVKFVNGRVVITNVGEPIISQPSKLLNGIAYTTFSGSFDNGHYVVYDAANNAVYDGARLFSSDLSTLAVTAIVVVGGCVTSNVPTIVSEKISVMDKLDTGAQKFFQFGDFVMNNIVLFLTWLLSMFSLLRTSIMKHDIKVIAKAPKRTGVILTRSFKYNIRSALFVIKQKWCVIVTLFKFLLLLYAIYALVFMIVQFSPFNSLLCGDIVSGYEKSTFNKDIYCGNSMVCKMCLFSYQEFNDLDHTSLVWKHIRDPILISLQPFVILVILLIFGNMYLRFGLLYFVAQFISTFGSFLGFHQKQWFLHFVPFDVLCNEFLATFIVCKIVLFVRHIIVGCNNADCVACSKSARLKRVPLQTIINGMHKSFYVNANGGTCFCNKHNFFCVNCDSFGPGNTFINGDIARELGNVVKTAVQPTAPAYVIIDKVDFVNGFYRLYSGDTFWRYDFDITESKYSCKEVLKNCNVLENFIVYNNSGSNITQIKNACVYFSQLLCEPIKLVNSELLSTLSVDFNGVLHKAYVDVLCNSFFKELTANMSMAECKATLGLTVSDDDFVSAVANAHRYDVLLSDLSFNNFFISYAKPEDKLSVYDIACCMRAGSKVVNHNVLIKESIPIVWGVKDFNTLSQEGKKYLVKTTKAKGLTFLLTFNDNQAITQVPATSIVAKQGAGFKRTYNFLWYVCLFVVALFIGVSFIDYTTTVTSFHGYDFKYIENGQLKVFEAPLHCVRNVFDNFNQWHEAKFGVVTTNSDKCPIVVGVSERINVVPGVPTNVYLVGKTLVFTLQAAFGNTGVCYDFDGVTTSDKCIFNSACTRLEGLGGDNVYCYNTDLIEGSKPYSTLQPNAYYKYDAKNYVRFPEILARGFGLRTIRTLATRYCRVGECRDSHKGVCFGFDKWYVNDGRVDDGYICGDGLIDLLVNVLSIFSSSFSVVAMSGHMLFNFLFAAFITFLCFLVTKFKRVFGDLSYGVFTVVCATLINNISYVVTQNLFFMLLYAILYFVFTRTVRYAWIWHIAYIVAYFLLIPWWLLTWFSFAAFLELLPNVFKLKISTQLFEGDKFIGTFESAAAGTFVLDMRSYERLINTISPEKLKNYAASYNKYKYYSGSASEADYRCACYAHLAKAMLDYAKDHNDMLYSPPTISYNSTLQSGLKKMAQPSGCVERCVVRVCYGSTVLNGVWLGDTVTCPRHVIAPSTTVLIDYDHAYSTMRLHNFSVSHNGVFLGVVGVTMHGSVLRIKVSQSNVHTPKHVFKTLKPGDSFNILACYEGIASGVFGVNLRTNFTIKGSFINGACGSPGYNVRNDGTVEFCYLHQIELGSGAHVGSDFTGSVYGNFDDQPSLQVESANLMLSDNVVAFLYAALLNGCRWWLCSTRVNVDGFNEWAMANGYTSVSSVECYSILAAKTGVSVEQLLASIQHLHEGFGGKNILGYSSLCDEFTLAEVVKQMYGVNLQSGKVIFGLKTMFLFSVFFTMFWAELFIYTNTIWINPVILTPIFCLLLFLSLVLTMFLKHKFLFLQVFLLPTVIATALYNCVLDYYIVKFLADHFNYNVSVLQMDVQGLVNVLVCLFVVFLHTWRFSKERFTHWFTYVCSLIAVAYTYFYSGDFLSLLVMFLCAISSDWYIGAIVFRLSRLIVFFSPESVFSVFGDVKLTLVVYLICGYLVCTYWGILYWFNRFFKCTMGVYDFKVSAAEFKYMVANGLHAPHGPFDALWLSFKLLGIGGDRCIKISTVQSKLTDLKCTNVVLLGCLSSMNIAANSSEWAYCVDLHNKINLCDDPEKAQSMLLALLAFFLSKHSDFGLDGLIDSYFDNSSTLQSVASSFVSMPSYIAYENARQAYEDAIANGSSSQLIKQLKRAMNIAKSEFDHEISVQKKINRMAEQAATQMYKEARSVNRKSKVISAMHSLLFGMLRRLDMSSVETVLNLARDGVVPLSVIPATSASKLTIVSPDLESYSKIVCDGSVHYAGVVWTLNDVKDNDGRPVHVKEITKENVETLTWPLILNCERVVKLQNNEIMPGKLKQKPMKAEGDGGVLGDGNALYNTEGGKTFMYAYISNKADLKFVKWEYEGGCNTIELDSPCRFMVETPNGPQVKYLYFVKNLNTLRRGAVLGFIGATIRLQAGKQTELAVNSGLLTACAFSVDPATTYLEAVKHGAKPVSNCIKMLSNGAGNGQAITTSVDANTNQDSYGGASICLYCRAHVPHPSMDGYCKFKGKCVQVPIGCLDPIRFCLENNVCNVCGCWLGHGCACDRTTIQSVDISYLNEQGVLVQLD.

Residues Phe-2 to Ala-109 form the CoV Nsp1 globular domain. Residues Val-112–Leu-358 form the CoV Nsp2 N-terminal domain. Zn(2+) is bound by residues Cys-245, Cys-247, Cys-264, and Cys-265. The segment at Cys-245–Cys-265 is C4. The 391-residue stretch at Tyr-388–Thr-778 folds into the CoV Nsp2 middle domain. In terms of domain architecture, CoV Nsp2 C-terminal spans Leu-776–Gly-898. The region spanning Gly-899–Asn-994 is the Ubiquitin-like 1 domain. The 242-residue stretch at Glu-1021 to Val-1262 folds into the Peptidase C16 1 domain. The For PL1-PRO activity role is filled by Cys-1062. Residues Cys-1134, Cys-1136, Cys-1163, and Cys-1165 each coordinate Zn(2+). The segment at Cys-1134 to Cys-1165 adopts a C4-type 1 zinc-finger fold. Active-site for PL1-PRO activity residues include His-1212 and Asp-1225. The 159-residue stretch at Tyr-1263–Asp-1421 folds into the Macro domain. In terms of domain architecture, Ubiquitin-like 2 spans Asn-1579 to Ala-1633. Positions Ala-1640–Ser-1886 constitute a Peptidase C16 2 domain. The For PL2-PRO activity role is filled by Cys-1678. Zn(2+)-binding residues include Cys-1757, Cys-1760, Cys-1786, and His-1788. The C4-type 2; atypical zinc finger occupies Cys-1757–His-1788. Residues His-1836 and Asp-1841 each act as for PL2-PRO activity in the active site. 2 consecutive transmembrane segments (helical) span residues Asp-1903–Leu-1923 and Ile-1968–Ile-1988. An HD1 region spans residues Asp-1903–Cys-2131. Residues Ala-1983–Asp-2048 form the 3Ecto domain. Intrachain disulfides connect Cys-1999–Cys-2026 and Cys-2017–Cys-2023. 3 helical membrane-spanning segments follow: residues Ile-2050–Tyr-2070, Phe-2073–His-2093, and Phe-2111–Cys-2131. Positions Leu-2122–Ala-2212 are Y1. In terms of domain architecture, CoV Nsp3 Y spans Leu-2122–Gly-2461. Zn(2+) contacts are provided by His-2126, Cys-2131, Cys-2136, Cys-2139, Cys-2172, His-2175, Cys-2179, and Cys-2182. A ZF1 region spans residues His-2126–Cys-2139. The interval Cys-2172–Cys-2182 is ZF2. The interval Pro-2213 to Leu-2302 is Y2. Residues Pro-2213–Gly-2461 form a coV-Y region. The Y3 stretch occupies residues Ser-2303–Asp-2359. Residues Val-2360–Gly-2461 form a Y4 region. Transmembrane regions (helical) follow at residues Tyr-2468 to Ile-2488, Gly-2727 to Thr-2747, Val-2752 to Ile-2769, Ile-2772 to Val-2792, and Ala-2800 to Leu-2820. Residues Tyr-2468–Leu-2820 are HD2. The region spanning Leu-2844–Gln-2939 is the Nsp4C domain. One can recognise a Peptidase C30 domain in the interval Ser-2940 to Gln-3242. Catalysis depends on for 3CL-PRO activity residues His-2980 and Cys-3083. 7 consecutive transmembrane segments (helical) span residues Phe-3254–Ile-3274, Val-3279–Leu-3299, Phe-3303–Val-3323, Val-3342–Leu-3362, Phe-3376–Leu-3396, Ser-3397–Phe-3417, and Leu-3442–Phe-3462. The tract at residues Phe-3254–Phe-3462 is HD3. In terms of domain architecture, RdRp Nsp7 cofactor spans Ser-3522–Gln-3604. The RdRp Nsp8 cofactor domain occupies Ser-3605–Gln-3799. The 109-residue stretch at Asn-3800 to Gln-3908 folds into the Nsp9 ssRNA-binding domain. An ExoN/MTase coactivator domain is found at Ala-3909 to Ile-4047. Zn(2+)-binding residues include Cys-3982, Cys-3985, His-3991, Cys-3998, Cys-4024, Cys-4027, Cys-4035, and Cys-4037. Zinc fingers lie at residues Cys-3982–Cys-3998 and Cys-4024–Cys-4037.

It belongs to the coronaviruses polyprotein 1ab family. In terms of assembly, 3CL-PRO exists as monomer and homodimer. Eight copies of nsp7 and eight copies of nsp8 assemble to form a heterohexadecamer. Nsp9 is a dimer. Nsp10 forms a dodecamer. Specific enzymatic cleavages in vivo by its own proteases yield mature proteins. 3CL-PRO and PL-PRO proteinases are autocatalytically processed.

Its subcellular location is the host membrane. It localises to the host cytoplasm. It is found in the host perinuclear region. The catalysed reaction is Thiol-dependent hydrolysis of ester, thioester, amide, peptide and isopeptide bonds formed by the C-terminal Gly of ubiquitin (a 76-residue protein attached to proteins as an intracellular targeting signal).. Functionally, the papain-like proteinase 1 (PLP1) and papain-like proteinase 2 (PLP2) are responsible for the cleavages located at the N-terminus of the replicase polyprotein. In addition, PLP2 possesses a deubiquitinating/deISGylating activity and processes both 'Lys-48'- and 'Lys-63'-linked polyubiquitin chains from cellular substrates. PLP2 also antagonizes innate immune induction of type I interferon by blocking the nuclear translocation of host IRF-3. In terms of biological role, responsible for the majority of cleavages as it cleaves the C-terminus of replicase polyprotein at 11 sites. Recognizes substrates containing the core sequence [ILMVF]-Q-|-[SGACN]. Inhibited by the substrate-analog Cbz-Val-Asn-Ser-Thr-Leu-Gln-CMK. Also contains an ADP-ribose-1''-phosphate (ADRP)-binding function. Nsp7-nsp8 hexadecamer may possibly confer processivity to the polymerase, maybe by binding to dsRNA or by producing primers utilized by the latter. Its function is as follows. Nsp9 is a ssRNA-binding protein. This is Replicase polyprotein 1a from Homo sapiens (Human).